The primary structure comprises 245 residues: Probable phosphatase PMI1003 (245 aa).

Residues histidine 7, histidine 9, histidine 15, histidine 40, glutamate 73, histidine 101, histidine 131, aspartate 192, and histidine 194 each contribute to the Zn(2+) site.

It belongs to the PHP family. In terms of assembly, homotrimer. It depends on Zn(2+) as a cofactor.

The chain is Probable phosphatase PMI1003 from Proteus mirabilis (strain HI4320).